A 138-amino-acid polypeptide reads, in one-letter code: Large ribosomal subunit protein uL16 (138 aa).

The span at 1-15 (MLSPKKVKYRKKQRG) shows a compositional bias: basic residues. Residues 1–21 (MLSPKKVKYRKKQRGRLSGEA) form a disordered region.

It belongs to the universal ribosomal protein uL16 family. Part of the 50S ribosomal subunit.

Functionally, binds 23S rRNA and is also seen to make contacts with the A and possibly P site tRNAs. The protein is Large ribosomal subunit protein uL16 of Borreliella afzelii (strain PKo) (Borrelia afzelii).